Here is a 347-residue protein sequence, read N- to C-terminus: Protein phosphatase 2C homolog 1 (347 aa).

Positions Met-1 to Glu-41 are disordered. Residues Asn-32–Glu-41 are compositionally biased toward basic and acidic residues. A PPM-type phosphatase domain is found at Leu-71 to Leu-323. Mn(2+)-binding residues include Asp-109, Gly-110, Asp-275, and Asp-314.

The protein belongs to the PP2C family. In terms of assembly, monomer. Mg(2+) is required as a cofactor. The cofactor is Mn(2+).

The enzyme catalyses O-phospho-L-seryl-[protein] + H2O = L-seryl-[protein] + phosphate. It catalyses the reaction O-phospho-L-threonyl-[protein] + H2O = L-threonyl-[protein] + phosphate. Functionally, serine and threonine phosphatase. Has a specialized role in the heat shock response. May be responsible for the dephosphorylation of hsp90. This Schizosaccharomyces pombe (strain 972 / ATCC 24843) (Fission yeast) protein is Protein phosphatase 2C homolog 1 (ptc1).